The chain runs to 499 residues: Serine/threonine-protein phosphatase 5 (499 aa).

Positions M1 to T24 are disordered. Position 2 is an N-acetylalanine (A2). 3 TPR repeats span residues A28–N61, A62–Y95, and I96–D129. A catalytic region spans residues G184 to M499. D242, H244, and D271 together coordinate Mn(2+). Residue H244 participates in substrate binding. Substrate is bound by residues R275 and N303 to H304. Mn(2+) is bound at residue N303. Catalysis depends on H304, which acts as the Proton donor/acceptor. Residue H352 coordinates Mn(2+). Positions 400 and 427 each coordinate substrate. Residue H427 coordinates Mn(2+). Residues Q495–M499 are required for autoinhibition.

It belongs to the PPP phosphatase family. PP-5 (PP-T) subfamily. In terms of assembly, probably forms a complex composed of chaperones HSP90 and HSP70, co-chaperones STIP1/HOP, CDC37, PPP5C, PTGES3/p23, TSC1 and client protein TSC2. Probably forms a complex composed of chaperones HSP90 and HSP70, co-chaperones CDC37, PPP5C, TSC1 and client protein TSC2, CDK4, AKT, RAF1 and NR3C1; this complex does not contain co-chaperones STIP1/HOP and PTGES3/p23. Part of a complex with HSP90/HSP90AA1 and steroid receptors. Interacts (via TPR repeats) with HSP90AA1 (via TPR repeat-binding motif) or HSPA1A/HSPA1B; the interaction is direct and activates the phosphatase activity. Dissociates from HSPA1A/HSPA1B and HSP90AA1 in response to arachidonic acid. Interacts with CPNE1 (via VWFA domain). Interacts with CDC16, CDC27. Interacts with KLHDC10 (via the 6 Kelch repeats); inhibits the phosphatase activity on MAP3K5. Interacts with ATM and ATR; both interactions are induced by DNA damage and enhance ATM and ATR kinase activity. Interacts with RAD17; reduced by DNA damage. Interacts with nuclear receptors such as NR3C1/GCR and PPARG (activated by agonist); regulates their transactivation activities. Interacts (via TPR repeats) with S100 proteins S100A1, S100A2, S100A6, S100B and S100P; the interactions are calcium-dependent, strongly activate PPP5C phosphatase activity and compete with HSP90AA1 and MAP3K5 interactions. Interacts with SMAD2 and SMAD3 but not with SMAD1; decreases SMAD3 phosphorylation and protein levels. Interacts (via TPR repeats) with CRY1 and CRY2; the interaction with CRY2 down-regulates the phosphatase activity on CSNK1E. Interacts (via TPR repeats) with the active form of RAC1, GNA12 or GNA13; these interactions activate the phosphatase activity and translocate PPP5C to the cell membrane. Interacts with FLCN. Mg(2+) serves as cofactor. Mn(2+) is required as a cofactor. Activated by at least two different proteolytic cleavages producing a 56 kDa and a 50 kDa form. Expressed in liver (at protein level) and brain, enriched in suprachiasmatic nuclei.

The protein resides in the nucleus. It localises to the cytoplasm. Its subcellular location is the cell membrane. The enzyme catalyses O-phospho-L-seryl-[protein] + H2O = L-seryl-[protein] + phosphate. It carries out the reaction O-phospho-L-threonyl-[protein] + H2O = L-threonyl-[protein] + phosphate. Its activity is regulated as follows. Autoinhibited. In the autoinhibited state, the TPR domain interacts with the catalytic region and prevents substrate access to the catalytic pocket. Allosterically activated by various polyunsaturated fatty acids, free long-chain fatty-acids and long-chain fatty acyl-CoA esters, arachidonic acid being the most effective activator. HSP90A and probably RAC1, GNA12 and GNA13 can also release the autoinhibition by the TPR repeat. Activation by RAC1, GNA12 and GNA13 is synergistic with the one produced by fatty acids binding. Inhibited by okadaic acid. In terms of biological role, serine/threonine-protein phosphatase that dephosphorylates a myriad of proteins involved in different signaling pathways including the kinases CSNK1E, ASK1/MAP3K5, PRKDC and RAF1, the nuclear receptors NR3C1, PPARG, ESR1 and ESR2, SMAD proteins and TAU/MAPT. Implicated in wide ranging cellular processes, including apoptosis, differentiation, DNA damage response, cell survival, regulation of ion channels or circadian rhythms, in response to steroid and thyroid hormones, calcium, fatty acids, TGF-beta as well as oxidative and genotoxic stresses. Participates in the control of DNA damage response mechanisms such as checkpoint activation and DNA damage repair through, for instance, the regulation ATM/ATR-signaling and dephosphorylation of PRKDC and TP53BP1. Inhibits ASK1/MAP3K5-mediated apoptosis induced by oxidative stress. Plays a positive role in adipogenesis, mainly through the dephosphorylation and activation of PPARG transactivation function. Also dephosphorylates and inhibits the anti-adipogenic effect of NR3C1. Regulates the circadian rhythms, through the dephosphorylation and activation of CSNK1E. May modulate TGF-beta signaling pathway by the regulation of SMAD3 phosphorylation and protein expression levels. Dephosphorylates and may play a role in the regulation of TAU/MAPT. Through their dephosphorylation, may play a role in the regulation of ions channels such as KCNH2. Dephosphorylate FNIP1, disrupting interaction with HSP90AA1/Hsp90. This Mus musculus (Mouse) protein is Serine/threonine-protein phosphatase 5 (Ppp5c).